The following is a 229-amino-acid chain: Phosphoglycolate phosphatase (229 aa).

The active-site Nucleophile is the Asp18. Mg(2+)-binding residues include Asp18, Asp20, and Asp176.

It belongs to the HAD-like hydrolase superfamily. CbbY/CbbZ/Gph/YieH family. Mg(2+) serves as cofactor.

It carries out the reaction 2-phosphoglycolate + H2O = glycolate + phosphate. It participates in organic acid metabolism; glycolate biosynthesis; glycolate from 2-phosphoglycolate: step 1/1. In terms of biological role, specifically catalyzes the dephosphorylation of 2-phosphoglycolate. Is involved in the dissimilation of the intracellular 2-phosphoglycolate formed during the DNA repair of 3'-phosphoglycolate ends, a major class of DNA lesions induced by oxidative stress. This Xylella fastidiosa (strain Temecula1 / ATCC 700964) protein is Phosphoglycolate phosphatase.